The primary structure comprises 795 residues: Cyclin-dependent kinase 11B (795 aa).

A compositionally biased stretch (basic and acidic residues) spans 17–60; the sequence is LQEKKRRKEQEEKAEIKRLKNSDDRDSKRDSLEEGELRDHRMEI. A disordered region spans residues 17–412; it reads LQEKKRRKEQ…EGDYVPDSPA (396 aa). Ser-47 and Ser-72 each carry phosphoserine. The segment covering 95 to 113 has biased composition (basic residues); that stretch reads EKAHHRKDEKRKEKRRHRS. Composition is skewed to basic and acidic residues over residues 114-131, 138-227, 238-253, and 264-276; these read HSAE…EREH, REEQ…DKVK, PPRE…KPGE, and QLKE…RDLL. At Ser-115 the chain carries Phosphoserine. Ser-283 carries the phosphoserine modification. Residues 291–302 show a composition bias toward low complexity; the sequence is SAESSSAESGSG. Acidic residues-rich tracts occupy residues 303–364 and 383–392; these read SEEE…EERE and ESEEAEEEVG. The Protein kinase domain occupies 438–723; sequence FQCLNRIEEG…AEDGLKHEYF (286 aa). Residues 444–452 and Lys-467 contribute to the ATP site; that span reads IEEGTYGVV. Position 482 is a phosphoserine; by CDK7 (Ser-482). At Thr-488 the chain carries Phosphothreonine; by CDK7. Catalysis depends on Asp-562, which acts as the Proton acceptor. Ser-589 bears the Phosphoserine mark. Tyr-594 is modified (phosphotyrosine). At Thr-595 the chain carries Phosphothreonine. Lys-641 participates in a covalent cross-link: Glycyl lysine isopeptide (Lys-Gly) (interchain with G-Cter in SUMO2). A disordered region spans residues 733–795; the sequence is SMFPTWPAKS…AAGPGFSLKF (63 aa). Thr-751 bears the Phosphothreonine mark. Ser-752 carries the phosphoserine modification.

Belongs to the protein kinase superfamily. CMGC Ser/Thr protein kinase family. CDC2/CDKX subfamily. Cleaved isoform SV9 (p110C) binds to the serine/threonine kinase PAK1 and RANBP9. p110C interacts with RNPS1. Isoform 7, but not isoform SV9, nor its cleavage product p110C, interacts with CCND3. Interacts with CCNL1 and CCNL2. Forms complexes with pre-mRNA-splicing factors, including at least SRSF1, SRSF2 and SRSF7/SLU7. Interacts with isoform 5 of MYO18A. As to quaternary structure, (Microbial infection) Interacts with human herpes virus 1 (HHV-1) transcriptional regulator ICP22. Requires Mg(2+) as cofactor. Post-translationally, during FAS- or TNF-induced apoptosis, isoform SV9 is cleaved by caspases to produce p110C, a fragment that contains the C-terminal kinase domain. Phosphorylation at Ser-115 creates a binding site for 14-3-3 proteins. p110C can be autophosphorylated. Expressed ubiquitously. Some evidence of isoform-specific tissue distribution.

It localises to the cytoplasm. The protein resides in the nucleus. It carries out the reaction L-seryl-[protein] + ATP = O-phospho-L-seryl-[protein] + ADP + H(+). It catalyses the reaction L-threonyl-[protein] + ATP = O-phospho-L-threonyl-[protein] + ADP + H(+). With respect to regulation, phosphorylation at Thr-448 or Tyr-449 inactivates the enzyme, while phosphorylation at Thr-595 activates it. Plays multiple roles in cell cycle progression, cytokinesis and apoptosis. Involved in pre-mRNA splicing in a kinase activity-dependent manner. Isoform 7 may act as a negative regulator of normal cell cycle progression. This is Cyclin-dependent kinase 11B (CDK11B) from Homo sapiens (Human).